Reading from the N-terminus, the 562-residue chain is T-complex protein 1 subunit epsilon (562 aa).

It belongs to the TCP-1 chaperonin family. As to quaternary structure, heterooligomeric complex of about 850 to 900 kDa that forms two stacked rings, 12 to 16 nm in diameter.

It localises to the cytoplasm. In terms of biological role, molecular chaperone; assists the folding of proteins upon ATP hydrolysis. Known to play a role, in vitro, in the folding of actin and tubulin. In yeast may play a role in mitotic spindle formation. The protein is T-complex protein 1 subunit epsilon (CCT5) of Saccharomyces cerevisiae (strain ATCC 204508 / S288c) (Baker's yeast).